A 186-amino-acid polypeptide reads, in one-letter code: Large ribosomal subunit protein uL5 (186 aa).

Belongs to the universal ribosomal protein uL5 family. As to quaternary structure, part of the 50S ribosomal subunit; part of the 5S rRNA/L5/L18/L25 subcomplex. Contacts the 5S rRNA and the P site tRNA. Forms a bridge to the 30S subunit in the 70S ribosome.

Its function is as follows. This is one of the proteins that bind and probably mediate the attachment of the 5S RNA into the large ribosomal subunit, where it forms part of the central protuberance. In the 70S ribosome it contacts protein S13 of the 30S subunit (bridge B1b), connecting the 2 subunits; this bridge is implicated in subunit movement. Contacts the P site tRNA; the 5S rRNA and some of its associated proteins might help stabilize positioning of ribosome-bound tRNAs. The chain is Large ribosomal subunit protein uL5 from Porphyromonas gingivalis (strain ATCC 33277 / DSM 20709 / CIP 103683 / JCM 12257 / NCTC 11834 / 2561).